The chain runs to 53 residues: Ovomucoid (53 aa).

A Kazal-like domain is found at 3 to 53 (VDCSEYPKPGCMMERLPLCGSDNKTYNDKCNFCNAVVESNGTLTLNHFGEC). 3 disulfide bridges follow: Cys-5–Cys-35, Cys-13–Cys-32, and Cys-21–Cys-53. Asn-42 carries N-linked (GlcNAc...) asparagine glycosylation.

It is found in the secreted. This Turnix sylvaticus (Common buttonquail) protein is Ovomucoid.